Reading from the N-terminus, the 1047-residue chain is Atrial natriuretic peptide receptor 2 (1047 aa).

An N-terminal signal peptide occupies residues 1-22 (MALPSLLLLVAALAGGVRPPGA). Over 23-458 (RNLTLAVVLP…DKTPLSTLAI (436 aa)) the chain is Extracellular. Asparagine 24 and asparagine 35 each carry an N-linked (GlcNAc...) asparagine glycan. A disulfide bridge connects residues cysteine 75 and cysteine 101. Asparagine 161, asparagine 195, asparagine 244, asparagine 277, and asparagine 349 each carry an N-linked (GlcNAc...) asparagine glycan. The helical transmembrane segment at 459-478 (VALGTGITFIMFGVSSFLIF) threads the bilayer. The Cytoplasmic segment spans residues 479–1047 (RKLMLEKELA…GERKGPPGLL (569 aa)). Serine 513 bears the Phosphoserine mark. The Protein kinase domain maps to 513–786 (SRLTLSLRGS…PDFGQIKGFI (274 aa)). Residue threonine 516 is modified to Phosphothreonine. Phosphoserine occurs at positions 518, 522, 523, and 526. At threonine 529 the chain carries Phosphothreonine. The Guanylate cyclase domain maps to 861-991 (TIYFSDIVGF…DTVNTASRME (131 aa)).

The protein belongs to the adenylyl cyclase class-4/guanylyl cyclase family. Phosphorylated. Phosphorylation of the protein kinase-like domain is required for full activation by CNP. Post-translationally, glycosylated.

Its subcellular location is the cell membrane. It carries out the reaction GTP = 3',5'-cyclic GMP + diphosphate. Its function is as follows. Receptor for the C-type natriuretic peptide NPPC/CNP hormone. Has guanylate cyclase activity upon binding of its ligand. May play a role in the regulation of skeletal growth. The chain is Atrial natriuretic peptide receptor 2 (NPR2) from Homo sapiens (Human).